The sequence spans 282 residues: MSNKIIGLGSIEIANDKPFVLFGGMNVLESRDLAMKIAETYAEVTQKLGIPYVFKASFDKANRSSVNSYRGPGMEEGLKIFEEIKSTFNLPLITDVHEVHQCAPVAEVVDIIQLPAFLARQTDLVVAMAKTDAIINVKKPQFLAPHEMRHIITKFNEAGNDKIILCERGSSFGYNNLVVDMLGMDEMKQSGYPVIFDATHALQRPGGRSDSAGGRRAQATELARSGMALGLAGLFIEAHPDPDNAKCDGPCALPLHQLEAYLTQMKAVDDLVKSFDAIDTSK.

Belongs to the KdsA family.

It is found in the cytoplasm. It catalyses the reaction D-arabinose 5-phosphate + phosphoenolpyruvate + H2O = 3-deoxy-alpha-D-manno-2-octulosonate-8-phosphate + phosphate. It participates in carbohydrate biosynthesis; 3-deoxy-D-manno-octulosonate biosynthesis; 3-deoxy-D-manno-octulosonate from D-ribulose 5-phosphate: step 2/3. It functions in the pathway bacterial outer membrane biogenesis; lipopolysaccharide biosynthesis. This chain is 2-dehydro-3-deoxyphosphooctonate aldolase, found in Shewanella sediminis (strain HAW-EB3).